A 136-amino-acid polypeptide reads, in one-letter code: Nucleoside diphosphate kinase (136 aa).

ATP is bound by residues K10, F58, R86, T92, R104, and N114. H117 acts as the Pros-phosphohistidine intermediate in catalysis.

It belongs to the NDK family. As to quaternary structure, homotetramer. Mg(2+) is required as a cofactor.

The protein localises to the cytoplasm. It catalyses the reaction a 2'-deoxyribonucleoside 5'-diphosphate + ATP = a 2'-deoxyribonucleoside 5'-triphosphate + ADP. It carries out the reaction a ribonucleoside 5'-diphosphate + ATP = a ribonucleoside 5'-triphosphate + ADP. In terms of biological role, major role in the synthesis of nucleoside triphosphates other than ATP. The ATP gamma phosphate is transferred to the NDP beta phosphate via a ping-pong mechanism, using a phosphorylated active-site intermediate. The polypeptide is Nucleoside diphosphate kinase (Corynebacterium efficiens (strain DSM 44549 / YS-314 / AJ 12310 / JCM 11189 / NBRC 100395)).